The following is a 421-amino-acid chain: UDP-N-acetylglucosamine 1-carboxyvinyltransferase (421 aa).

22-23 lines the phosphoenolpyruvate pocket; the sequence is KN. UDP-N-acetyl-alpha-D-glucosamine is bound at residue Arg-94. Cys-118 serves as the catalytic Proton donor. 2-(S-cysteinyl)pyruvic acid O-phosphothioketal is present on Cys-118. UDP-N-acetyl-alpha-D-glucosamine-binding positions include 163–166, Asp-308, and Ile-330; that span reads KVSV.

The protein belongs to the EPSP synthase family. MurA subfamily.

It is found in the cytoplasm. The catalysed reaction is phosphoenolpyruvate + UDP-N-acetyl-alpha-D-glucosamine = UDP-N-acetyl-3-O-(1-carboxyvinyl)-alpha-D-glucosamine + phosphate. It participates in cell wall biogenesis; peptidoglycan biosynthesis. In terms of biological role, cell wall formation. Adds enolpyruvyl to UDP-N-acetylglucosamine. In Orientia tsutsugamushi (strain Boryong) (Rickettsia tsutsugamushi), this protein is UDP-N-acetylglucosamine 1-carboxyvinyltransferase.